Reading from the N-terminus, the 496-residue chain is Glycerol kinase (496 aa).

An ADP-binding site is contributed by T12. T12, T13, and S14 together coordinate ATP. Residue T12 participates in sn-glycerol 3-phosphate binding. R16 serves as a coordination point for ADP. Residues R82, E83, and Y134 each coordinate sn-glycerol 3-phosphate. Residues R82, E83, and Y134 each contribute to the glycerol site. H230 bears the Phosphohistidine; by HPr mark. Sn-glycerol 3-phosphate is bound at residue D244. Glycerol contacts are provided by D244 and Q245. Residues T266 and G309 each contribute to the ADP site. ATP contacts are provided by T266, G309, Q313, and G410. Residues G410 and N414 each contribute to the ADP site.

Belongs to the FGGY kinase family. In terms of assembly, homotetramer and homodimer (in equilibrium). Post-translationally, the phosphoenolpyruvate-dependent sugar phosphotransferase system (PTS), including enzyme I, and histidine-containing protein (HPr) are required for the phosphorylation, which leads to the activation of the enzyme.

It catalyses the reaction glycerol + ATP = sn-glycerol 3-phosphate + ADP + H(+). It participates in polyol metabolism; glycerol degradation via glycerol kinase pathway; sn-glycerol 3-phosphate from glycerol: step 1/1. Its activity is regulated as follows. Activated by phosphorylation and inhibited by fructose 1,6-bisphosphate (FBP). In terms of biological role, key enzyme in the regulation of glycerol uptake and metabolism. Catalyzes the phosphorylation of glycerol to yield sn-glycerol 3-phosphate. The sequence is that of Glycerol kinase from Bacillus anthracis (strain A0248).